Consider the following 518-residue polypeptide: Probable lysine--tRNA ligase, cytoplasmic (518 aa).

The protein belongs to the class-II aminoacyl-tRNA synthetase family. In terms of assembly, homodimer.

It is found in the cytoplasm. The catalysed reaction is tRNA(Lys) + L-lysine + ATP = L-lysyl-tRNA(Lys) + AMP + diphosphate. This Enterocytozoon bieneusi (strain H348) (Microsporidian parasite) protein is Probable lysine--tRNA ligase, cytoplasmic.